The following is an 865-amino-acid chain: Leucine--tRNA ligase (865 aa).

Residues 48 to 58 carry the 'HIGH' region motif; the sequence is PYPSGQLHVGH. The short motif at 626-630 is the 'KMSKS' region element; it reads KMSKS. Lys-629 is a binding site for ATP.

It belongs to the class-I aminoacyl-tRNA synthetase family.

It localises to the cytoplasm. It carries out the reaction tRNA(Leu) + L-leucine + ATP = L-leucyl-tRNA(Leu) + AMP + diphosphate. This is Leucine--tRNA ligase from Gluconobacter oxydans (strain 621H) (Gluconobacter suboxydans).